A 407-amino-acid polypeptide reads, in one-letter code: Elongation factor Tu (407 aa).

The region spanning 10 to 217 (KPHVNVGTIG…ALDSYIPEPE (208 aa)) is the tr-type G domain. Positions 19 to 26 (GHVDHGKT) are G1. 19–26 (GHVDHGKT) contacts GTP. Threonine 26 is a Mg(2+) binding site. The G2 stretch occupies residues 60–64 (GITIA). Residues 81–84 (DCPG) are G3. Residues 81-85 (DCPGH) and 136-139 (NKAD) each bind GTP. A G4 region spans residues 136–139 (NKAD). Positions 184-186 (SAL) are G5.

The protein belongs to the TRAFAC class translation factor GTPase superfamily. Classic translation factor GTPase family. EF-Tu/EF-1A subfamily. In terms of assembly, monomer.

The protein localises to the cytoplasm. It catalyses the reaction GTP + H2O = GDP + phosphate + H(+). Functionally, GTP hydrolase that promotes the GTP-dependent binding of aminoacyl-tRNA to the A-site of ribosomes during protein biosynthesis. This is Elongation factor Tu from Saccharophagus degradans (strain 2-40 / ATCC 43961 / DSM 17024).